A 309-amino-acid polypeptide reads, in one-letter code: Porphobilinogen deaminase (309 aa).

C242 carries the S-(dipyrrolylmethanemethyl)cysteine modification.

It belongs to the HMBS family. Monomer. Dipyrromethane serves as cofactor.

The catalysed reaction is 4 porphobilinogen + H2O = hydroxymethylbilane + 4 NH4(+). The protein operates within porphyrin-containing compound metabolism; protoporphyrin-IX biosynthesis; coproporphyrinogen-III from 5-aminolevulinate: step 2/4. Functionally, tetrapolymerization of the monopyrrole PBG into the hydroxymethylbilane pre-uroporphyrinogen in several discrete steps. This is Porphobilinogen deaminase from Actinobacillus succinogenes (strain ATCC 55618 / DSM 22257 / CCUG 43843 / 130Z).